We begin with the raw amino-acid sequence, 562 residues long: NAD-dependent malic enzyme (562 aa).

The Proton donor role is filled by Y101. R154 is an NAD(+) binding site. K172 (proton acceptor) is an active-site residue. A divalent metal cation contacts are provided by E243, D244, and D267. Positions 267 and 415 each coordinate NAD(+).

The protein belongs to the malic enzymes family. Homotetramer. Mg(2+) is required as a cofactor. The cofactor is Mn(2+).

The enzyme catalyses (S)-malate + NAD(+) = pyruvate + CO2 + NADH. It carries out the reaction oxaloacetate + H(+) = pyruvate + CO2. This chain is NAD-dependent malic enzyme, found in Vibrio campbellii (strain ATCC BAA-1116).